A 120-amino-acid chain; its full sequence is Prefoldin subunit beta (120 aa).

This sequence belongs to the prefoldin subunit beta family. Heterohexamer of two alpha and four beta subunits.

It is found in the cytoplasm. Molecular chaperone capable of stabilizing a range of proteins. Seems to fulfill an ATP-independent, HSP70-like function in archaeal de novo protein folding. This is Prefoldin subunit beta (pfdB) from Methanopyrus kandleri (strain AV19 / DSM 6324 / JCM 9639 / NBRC 100938).